The sequence spans 173 residues: Alpha-crystallin A chain (173 aa).

An N-acetylmethionine modification is found at M1. Residues M1 to E63 are required for complex formation with BFSP1 and BFSP2. Q6 bears the Deamidated glutamine; partial mark. Residue S45 is modified to Phosphoserine. Q50 carries the post-translational modification Deamidated glutamine; partial. The region spanning L52–S162 is the sHSP domain. N6-acetyllysine occurs at positions 70 and 99. Zn(2+) is bound by residues H100, E102, and H107. A disordered region spans residues K145–S173. The O-linked (GlcNAc) serine glycan is linked to S162.

Belongs to the small heat shock protein (HSP20) family. As to quaternary structure, heteromer composed of three CRYAA and one CRYAB subunits. Zinc coordination is achieved at least by His-100, Glu-102 and His-107. His-100 and Glu-102 come from the same molecule within the oligomer, while His-107 residue is provided by another molecule. Inter-subunit bridging via zinc ions enhances stability, which is crucial as there is no protein turn over in the lens. Can also form homodimers and homotetramers (dimers of dimers) which serve as the building blocks of homooligomers. Part of a complex required for lens intermediate filament formation composed of BFSP1, BFSP2 and CRYAA. Acetylation at Lys-70 may increase chaperone activity. In terms of processing, undergoes age-dependent proteolytical cleavage at the C-terminus.

Its subcellular location is the cytoplasm. It is found in the nucleus. Functionally, contributes to the transparency and refractive index of the lens. Acts as a chaperone, preventing aggregation of various proteins under a wide range of stress conditions. Required for the correct formation of lens intermediate filaments as part of a complex composed of BFSP1, BFSP2 and CRYAA. This Erinaceus europaeus (Western European hedgehog) protein is Alpha-crystallin A chain (CRYAA).